The following is a 230-amino-acid chain: Ribose-5-phosphate isomerase A (230 aa).

Substrate is bound by residues 32–35, 85–88, and 98–101; these read TGST, DGAD, and KGGG. Glutamate 107 acts as the Proton acceptor in catalysis. Residue lysine 125 coordinates substrate.

It belongs to the ribose 5-phosphate isomerase family. In terms of assembly, homodimer.

It catalyses the reaction aldehydo-D-ribose 5-phosphate = D-ribulose 5-phosphate. It functions in the pathway carbohydrate degradation; pentose phosphate pathway; D-ribose 5-phosphate from D-ribulose 5-phosphate (non-oxidative stage): step 1/1. In terms of biological role, catalyzes the reversible conversion of ribose-5-phosphate to ribulose 5-phosphate. The polypeptide is Ribose-5-phosphate isomerase A (Burkholderia ambifaria (strain ATCC BAA-244 / DSM 16087 / CCUG 44356 / LMG 19182 / AMMD) (Burkholderia cepacia (strain AMMD))).